The following is a 460-amino-acid chain: Putative protein p41 (460 aa).

In terms of domain architecture, Helicase ATP-binding spans 14 to 186 (INHLLDIKRS…WGQAWFVDQG (173 aa)).

This is Putative protein p41 (41) from Escherichia coli (Bacteriophage APSE-1).